The sequence spans 334 residues: Serine/Arginine-related protein 53 (334 aa).

Residues 1–13 are compositionally biased toward basic and acidic residues; sequence MGRRSSDTEEESR. 3 disordered regions span residues 1–179, 201–220, and 243–290; these read MGRR…HLPP, LKAK…EDQA, and QTFR…SIPT. Basic residues-rich tracts occupy residues 14 to 24 and 35 to 50; these read SKRKKKHRRRS and YSRK…KSRS. A compositionally biased stretch (basic and acidic residues) spans 51 to 62; sequence WSRDLQPRSHSY. Residues 78–118 show a composition bias toward basic residues; it reads SRRKRSRSRSRGRGKSYRVQRSRSKSRTRRSRSRPRLRSHS. Composition is skewed to basic and acidic residues over residues 132–166, 201–218, and 247–259; these read RSRD…KRGE, LKAK…KEED, and SSKE…EPSE. Residues 180–236 are a coiled coil; that stretch reads AEQAKARLQLVLEAAAKADEALKAKERNEEEAKRRKEEDQATLVEQVKRVKEIEAIE.

In terms of assembly, interacts (via Arg/Ser-rich domain) with LUC7L3, RBM39 and RSF1. In terms of processing, phosphorylated. In terms of tissue distribution, widely expressed. Expressed in brain, spinal cord, cerebellum.

It localises to the nucleus. The protein resides in the nucleus speckle. Its subcellular location is the cytoplasm. In terms of biological role, has a role in alternative splicing and transcription regulation. Involved in both constitutive and alternative pre-mRNA splicing. May have a role in the recognition of the 3' splice site during the second step of splicing. This Homo sapiens (Human) protein is Serine/Arginine-related protein 53 (RSRC1).